The following is a 756-amino-acid chain: ATP-dependent DNA helicase Hel308 (756 aa).

Residues glutamine 29 and 47-54 each bind ATP; that span reads SATASGKT. One can recognise a Helicase ATP-binding domain in the interval 34-201; it reads RAGLLNGENI…WLNAKLVKSD (168 aa). Residues 146–149 carry the DEAH box motif; the sequence is DEIH. Residues 233–435 form the Helicase C-terminal domain; that stretch reads SLINLTVDTL…PTSLKFHTLS (203 aa).

It belongs to the helicase family. Hel308 subfamily. In terms of assembly, monomer.

The enzyme catalyses Couples ATP hydrolysis with the unwinding of duplex DNA by translocating in the 3'-5' direction.. It catalyses the reaction ATP + H2O = ADP + phosphate + H(+). Functionally, DNA-dependent ATPase and 3'-5' DNA helicase that may be involved in repair of stalled replication forks. The chain is ATP-dependent DNA helicase Hel308 from Caldivirga maquilingensis (strain ATCC 700844 / DSM 13496 / JCM 10307 / IC-167).